Reading from the N-terminus, the 337-residue chain is Heat-inducible transcription repressor HrcA (337 aa).

This sequence belongs to the HrcA family.

Its function is as follows. Negative regulator of class I heat shock genes (grpE-dnaK-dnaJ and groELS operons). Prevents heat-shock induction of these operons. This Nocardioides sp. (strain ATCC BAA-499 / JS614) protein is Heat-inducible transcription repressor HrcA.